We begin with the raw amino-acid sequence, 337 residues long: GTP 3',8-cyclase (337 aa).

The Radical SAM core domain occupies 17–242; it reads TFQREYYYLR…RQKDRTDGPA (226 aa). Arg26 serves as a coordination point for GTP. [4Fe-4S] cluster contacts are provided by Cys33 and Cys37. Residue Tyr39 coordinates S-adenosyl-L-methionine. Residue Cys40 coordinates [4Fe-4S] cluster. A GTP-binding site is contributed by Arg76. An S-adenosyl-L-methionine-binding site is contributed by Gly80. A GTP-binding site is contributed by Thr107. Ser131 is a binding site for S-adenosyl-L-methionine. Position 168 (Lys168) interacts with GTP. Met202 is a binding site for S-adenosyl-L-methionine. Positions 265 and 268 each coordinate [4Fe-4S] cluster. GTP is bound at residue 270-272; it reads RLR. Position 282 (Cys282) interacts with [4Fe-4S] cluster.

It belongs to the radical SAM superfamily. MoaA family. In terms of assembly, monomer and homodimer. [4Fe-4S] cluster is required as a cofactor.

The enzyme catalyses GTP + AH2 + S-adenosyl-L-methionine = (8S)-3',8-cyclo-7,8-dihydroguanosine 5'-triphosphate + 5'-deoxyadenosine + L-methionine + A + H(+). The protein operates within cofactor biosynthesis; molybdopterin biosynthesis. Catalyzes the cyclization of GTP to (8S)-3',8-cyclo-7,8-dihydroguanosine 5'-triphosphate. In Mannheimia succiniciproducens (strain KCTC 0769BP / MBEL55E), this protein is GTP 3',8-cyclase.